A 324-amino-acid chain; its full sequence is Alkanal monooxygenase beta chain (324 aa).

It belongs to the bacterial luciferase oxidoreductase family. As to quaternary structure, heterodimer of an alpha and a beta chain.

The catalysed reaction is a long-chain fatty aldehyde + FMNH2 + O2 = a long-chain fatty acid + hnu + FMN + H2O + 2 H(+). In terms of biological role, light-emitting reaction in luminous bacteria. The specific role of the beta subunit is unknown, but it is absolutely required for bioluminescence activity. The polypeptide is Alkanal monooxygenase beta chain (luxB) (Photorhabdus laumondii subsp. laumondii (strain DSM 15139 / CIP 105565 / TT01) (Photorhabdus luminescens subsp. laumondii)).